The following is a 113-amino-acid chain: Putative membrane protein insertion efficiency factor (113 aa).

The protein belongs to the UPF0161 family.

It localises to the cell inner membrane. Functionally, could be involved in insertion of integral membrane proteins into the membrane. This Campylobacter jejuni subsp. doylei (strain ATCC BAA-1458 / RM4099 / 269.97) protein is Putative membrane protein insertion efficiency factor.